A 187-amino-acid polypeptide reads, in one-letter code: Transcriptional activator of sulfur metabolism MET28 (187 aa).

The 64-residue stretch at D105 to I168 folds into the bZIP domain. Residues K106–K136 are basic motif. Positions L137–I151 are leucine-zipper.

It belongs to the bZIP family. As to quaternary structure, interacts with MET4 to form a heteromeric complex which also includes CBF1. Forms two alternate complexes associating MET28 with MET4 and either MET31 or MET32. Binds to DNA through the MET4-MET28-CBF1 complex.

It is found in the cytoplasm. The protein localises to the nucleus. In terms of biological role, acts as an accessory factor in the activation of sulfur amino acids metabolism genes. Possesses no intrinsic transcription activation abilities. Binds to the MET16 promoter as a complex with MET4 and CBF1. Enhances the DNA-binding activity of CBF1. In Saccharomyces cerevisiae (strain ATCC 204508 / S288c) (Baker's yeast), this protein is Transcriptional activator of sulfur metabolism MET28 (MET28).